Consider the following 252-residue polypeptide: 2-succinyl-6-hydroxy-2,4-cyclohexadiene-1-carboxylate synthase (252 aa).

It belongs to the AB hydrolase superfamily. MenH family. Monomer.

The catalysed reaction is 5-enolpyruvoyl-6-hydroxy-2-succinyl-cyclohex-3-ene-1-carboxylate = (1R,6R)-6-hydroxy-2-succinyl-cyclohexa-2,4-diene-1-carboxylate + pyruvate. It functions in the pathway quinol/quinone metabolism; 1,4-dihydroxy-2-naphthoate biosynthesis; 1,4-dihydroxy-2-naphthoate from chorismate: step 3/7. Its pathway is quinol/quinone metabolism; menaquinone biosynthesis. In terms of biological role, catalyzes a proton abstraction reaction that results in 2,5-elimination of pyruvate from 2-succinyl-5-enolpyruvyl-6-hydroxy-3-cyclohexene-1-carboxylate (SEPHCHC) and the formation of 2-succinyl-6-hydroxy-2,4-cyclohexadiene-1-carboxylate (SHCHC). In Klebsiella pneumoniae subsp. pneumoniae (strain ATCC 700721 / MGH 78578), this protein is 2-succinyl-6-hydroxy-2,4-cyclohexadiene-1-carboxylate synthase.